The sequence spans 123 residues: Large ribosomal subunit protein uL14 (123 aa).

This sequence belongs to the universal ribosomal protein uL14 family. As to quaternary structure, part of the 50S ribosomal subunit. Forms a cluster with proteins L3 and L19. In the 70S ribosome, L14 and L19 interact and together make contacts with the 16S rRNA in bridges B5 and B8.

Functionally, binds to 23S rRNA. Forms part of two intersubunit bridges in the 70S ribosome. The protein is Large ribosomal subunit protein uL14 of Erwinia tasmaniensis (strain DSM 17950 / CFBP 7177 / CIP 109463 / NCPPB 4357 / Et1/99).